The following is a 1336-amino-acid chain: MGAGGRRMPVPPARLLLLPLLPCLLLLAPGTRGAPGCPVPIRGCKCSGERPKGLSGGAHNPARRRVVCGGGDLPEPPDPGLLPNGTITLLLSNNKITGLRNGSFLGLSLLEKLDLRSNVISTVQPGAFLGLGELKRLDLSNNRIGCLTSETFQGLPRLLRLNISGNIYSSLQPGVFDELPALKIVDFGTEFLTCDCRLRWLLPWARNHSLQLSERTLCAYPSALHAHALSSLQESQLRCEGALELHTHYLIPSLRQVVFQGDRLPFQCSASYLGNDTRIHWYHNGAPMESDEQAGIVLAENLIHDCTFITSELTLSHIGVWASGEWECSVSTVQGNTSKKVEIVVLETSASYCPAERVTNNRGDFRWPRTLAGITAYQSCLQYPFTSVPLSGGAPGTRASRRCDRAGRWEPGDYSHCLYTNDITRVLYTFVLMPINASNALTLAHQLRVYTAEAASFSDMMDVVYVAQMIQKFLGYVDQIKELVEVMVDMASNLMLVDEHLLWLAQREDKACSGIVGALERIGGAALSPHAQHISVNSRNVALEAYLIKPHSYVGLTCTAFQRREVGVSGAQPSSVGQDAPVEPEPLADQQLRFRCTTGRPNISLSSFHIKNSVALASIQLPPSLFSTLPAALAPPVPPDCTLQLLVFRNGRLFRSHGNNTSRPGAAGPGKRRGVATPVIFAGTSGCGVGNLTEPVAVSLRHWAEGADPMAAWWNQDGPGGWSSEGCRLRYSQPNVSSLYCQHLGNVAVLMELNAFPREAGGSGAGLHPVVYPCTALLLLCLFSTIITYILNHSSIHVSRKGWHMLLNLCFHMAMTSAVFVGGVTLTNYQMVCQAVGITLHYSSLSSLLWMGVKARVLHKELSWRAPPLEEGEAAPPGPRPMLRFYLIAGGIPLIICGITAAVNIHNYRDHSPYCWLVWRPSLGAFYIPVALILPITWIYFLCAGLHLRSHVAQNPKQGNRISLEPGEELRGSTRLRSSGVLLNDSGSLLATVSAGVGTPAPPEDGDGVYSPGVQLGALMTTHFLYLAMWACGALAVSQRWLPRVVCSCLYGVAASALGLFVFTHHCARRRDVRASWRACCPPASPSASHVPARALPTATEDGSPVLGEGPASLKSSPSGSSGRAPPPPCKLTNLQVAQSQVCEASVAARGDGEPEPTGSRGSLAPRHHNNLHHGRRVHKSRAKGHRAGETGGKSRLKALRAGTSPGAPELLSSESGSLHNSPSDSYPGSSRNSPGDGLPLEGEPMLTPSEGSDTSAAPIAETGRPGQRRSASRDNLKGSGSALERESKRRSYPLNTTSLNGAPKGGKYEDASVTGAEAIAGGSMKTGLWKSETTV.

The N-terminal stretch at 1-33 is a signal peptide; that stretch reads MGAGGRRMPVPPARLLLLPLLPCLLLLAPGTRG. Residues 34 to 769 lie on the Extracellular side of the membrane; that stretch reads APGCPVPIRG…AGGSGAGLHP (736 aa). N-linked (GlcNAc...) asparagine glycans are attached at residues asparagine 84 and asparagine 101. LRR repeat units lie at residues 85–106, 109–130, 133–154, and 157–178; these read GTITLLLSNNKITGLRNGSFLG, LLEKLDLRSNVISTVQPGAFLG, ELKRLDLSNNRIGCLTSETFQG, and RLLRLNISGNIYSSLQPGVFDE. N-linked (GlcNAc...) asparagine glycosylation is present at asparagine 162. Residues 190 to 241 form the LRRCT domain; sequence EFLTCDCRLRWLLPWARNHSLQLSERTLCAYPSALHAHALSSLQESQLRCEG. The Ig-like domain occupies 247 to 344; that stretch reads THYLIPSLRQ…GNTSKKVEIV (98 aa). Cysteine 268 and cysteine 328 are disulfide-bonded. Residue asparagine 275 is glycosylated (N-linked (GlcNAc...) asparagine). Positions 362–364 match the RGD motif; sequence RGD. One can recognise a GAIN-B domain in the interval 594–757; the sequence is FRCTTGRPNI…AVLMELNAFP (164 aa). N-linked (GlcNAc...) asparagine glycosylation is found at asparagine 602, asparagine 691, and asparagine 735. The tract at residues 711 to 757 is GPS; that stretch reads AAWWNQDGPGGWSSEGCRLRYSQPNVSSLYCQHLGNVAVLMELNAFP. Cysteine 727 and cysteine 741 form a disulfide bridge. The helical transmembrane segment at 770–790 threads the bilayer; that stretch reads VVYPCTALLLLCLFSTIITYI. Over 791 to 805 the chain is Cytoplasmic; sequence LNHSSIHVSRKGWHM. Residues 806–826 form a helical membrane-spanning segment; the sequence is LLNLCFHMAMTSAVFVGGVTL. At 827–830 the chain is on the extracellular side; that stretch reads TNYQ. A helical membrane pass occupies residues 831-851; it reads MVCQAVGITLHYSSLSSLLWM. Topologically, residues 852–884 are cytoplasmic; it reads GVKARVLHKELSWRAPPLEEGEAAPPGPRPMLR. Residues 885-905 traverse the membrane as a helical segment; sequence FYLIAGGIPLIICGITAAVNI. Over 906–922 the chain is Extracellular; it reads HNYRDHSPYCWLVWRPS. The helical transmembrane segment at 923–943 threads the bilayer; sequence LGAFYIPVALILPITWIYFLC. The Cytoplasmic portion of the chain corresponds to 944–1016; sequence AGLHLRSHVA…DGVYSPGVQL (73 aa). Residues 1017–1037 traverse the membrane as a helical segment; sequence GALMTTHFLYLAMWACGALAV. The Extracellular segment spans residues 1038-1044; the sequence is SQRWLPR. Residues 1045 to 1065 traverse the membrane as a helical segment; it reads VVCSCLYGVAASALGLFVFTH. Residues 1066-1336 are Cytoplasmic-facing; that stretch reads HCARRRDVRA…TGLWKSETTV (271 aa). Over residues 1084–1095 the composition is skewed to low complexity; the sequence is ASPSASHVPARA. The segment at 1084 to 1310 is disordered; it reads ASPSASHVPA…NGAPKGGKYE (227 aa). Serine 1104 carries the phosphoserine modification. Residues 1110 to 1124 show a composition bias toward low complexity; it reads GPASLKSSPSGSSGR. Over residues 1133–1143 the composition is skewed to polar residues; it reads TNLQVAQSQVC. The span at 1166 to 1186 shows a compositional bias: basic residues; that stretch reads PRHHNNLHHGRRVHKSRAKGH. The span at 1213–1234 shows a compositional bias: polar residues; the sequence is SSESGSLHNSPSDSYPGSSRNS. A PDZ-binding motif is present at residues 1333 to 1336; that stretch reads ETTV.

Belongs to the G-protein coupled receptor 2 family. Adhesion G-protein coupled receptor (ADGR) subfamily. Interacts with RECK; the interaction is direct. Interacts (via PDZ-binding motif) with DLG1 (via PDZ domains). The cleaved extracellular subunit interacts with the integrin heterodimer ITGAV:ITGB3. In terms of processing, glycosylated. Post-translationally, proteolytically cleaved into two subunits, an extracellular subunit and a seven-transmembrane subunit. Cleaved by thrombin (F2) and MMP1. Also cleaved by MMP9, with lower efficiency. Presence of the protein disulfide-isomerase P4HB at the cell surface is additionally required for shedding of the extracellular subunit, suggesting that the subunits are linked by disulfide bonds. Shedding is enhanced by the growth factor FGF2 and may promote cell survival during angiogenesis. In terms of tissue distribution, abundantly expressed in the vasculature of the developing embryo. Expression in normal adult tissues is specifically vascular with endothelial expression in CNS, including brain and retina and more widespread pericyte expression in the brain and organs, including the kidney, pancreas and corpus luteum.

Its subcellular location is the cell membrane. It localises to the cell projection. The protein resides in the filopodium. Functionally, endothelial receptor which functions together with RECK to enable brain endothelial cells to selectively respond to Wnt7 signals (WNT7A or WNT7B). Plays a key role in Wnt7-specific responses, such as endothelial cell sprouting and migration in the forebrain and neural tube, and establishment of the blood-brain barrier. Acts as a Wnt7-specific coactivator of canonical Wnt signaling: required to deliver RECK-bound Wnt7 to frizzled by assembling a higher-order RECK-ADGRA2-Fzd-LRP5-LRP6 complex. ADGRA2-tethering function does not rely on its G-protein coupled receptor (GPCR) structure but instead on its combined capacity to interact with RECK extracellularly and recruit the Dishevelled scaffolding protein intracellularly. Binds to the glycosaminoglycans heparin, heparin sulfate, chondroitin sulfate and dermatan sulfate. In Mus musculus (Mouse), this protein is Adhesion G protein-coupled receptor A2.